A 508-amino-acid chain; its full sequence is Hydroxymethylglutaryl-CoA synthase, mitochondrial (508 aa).

The transit peptide at 1–37 (MQRLLAPARRVLQVKRAMQETSLTPAHLLSAAQQRFS) directs the protein to the mitochondrion. The residue at position 52 (Lys52) is an N6-succinyllysine. 2 residues coordinate (3S)-3-hydroxy-3-methylglutaryl-CoA: Glu80 and Ala81. N6-acetyllysine; alternate is present on residues Lys83 and Lys118. N6-succinyllysine; alternate occurs at positions 83 and 118. Glu132 acts as the Proton donor/acceptor in catalysis. (3S)-3-hydroxy-3-methylglutaryl-CoA-binding residues include Cys166, Asn204, and Thr208. Cys166 functions as the Acyl-thioester intermediate in the catalytic mechanism. At Lys221 the chain carries N6-succinyllysine. Lys243 bears the N6-acetyllysine mark. Lys256 carries the N6-acetyllysine; alternate modification. Lys256 carries the N6-succinyllysine; alternate modification. (3S)-3-hydroxy-3-methylglutaryl-CoA contacts are provided by Ser258 and His301. The active-site Proton donor/acceptor is the His301. Lys306 is subject to N6-acetyllysine. Lys310 provides a ligand contact to (3S)-3-hydroxy-3-methylglutaryl-CoA. 2 positions are modified to N6-acetyllysine; alternate: Lys310 and Lys327. An N6-succinyllysine; alternate mark is found at Lys310 and Lys327. Lys333 carries the post-translational modification N6-succinyllysine. N6-acetyllysine; alternate occurs at positions 342, 350, 354, and 358. Lys342, Lys350, Lys354, and Lys358 each carry N6-succinyllysine; alternate. Asn380 and Ser414 together coordinate (3S)-3-hydroxy-3-methylglutaryl-CoA. Lys427 is modified (N6-acetyllysine). A Phosphoserine modification is found at Ser433. The residue at position 437 (Lys437) is an N6-acetyllysine. Ser440 is subject to Phosphoserine. Residue Lys447 is modified to N6-acetyllysine; alternate. Residue Lys447 is modified to N6-succinyllysine; alternate. Ser456 carries the phosphoserine modification. Lys473 bears the N6-acetyllysine; alternate mark. At Lys473 the chain carries N6-succinyllysine; alternate. Position 477 is a phosphoserine (Ser477).

This sequence belongs to the thiolase-like superfamily. HMG-CoA synthase family. As to quaternary structure, homodimer. Post-translationally, acetylation of Lys-427 is observed in liver mitochondria from fasted mice but not from fed mice. In terms of processing, succinylated. Desuccinylated by SIRT5. Succinylation, at least at Lys-83 and Lys-310, inhibits the enzymatic activity. In terms of tissue distribution, liver and kidney.

It is found in the mitochondrion. It catalyses the reaction acetoacetyl-CoA + acetyl-CoA + H2O = (3S)-3-hydroxy-3-methylglutaryl-CoA + CoA + H(+). The protein operates within metabolic intermediate biosynthesis; (R)-mevalonate biosynthesis; (R)-mevalonate from acetyl-CoA: step 2/3. Catalyzes the first irreversible step in ketogenesis, condensing acetyl-CoA to acetoacetyl-CoA to form HMG-CoA, which is converted by HMG-CoA reductase (HMGCR) into mevalonate. This Mus musculus (Mouse) protein is Hydroxymethylglutaryl-CoA synthase, mitochondrial (Hmgcs2).